Here is a 937-residue protein sequence, read N- to C-terminus: Aconitate hydratase A (937 aa).

Cysteine 439, cysteine 505, and cysteine 508 together coordinate [4Fe-4S] cluster. The interval 898 to 921 is disordered; the sequence is KKESKSTQSTTSKGCGSADTSSET.

It belongs to the aconitase/IPM isomerase family. As to quaternary structure, monomer. [4Fe-4S] cluster serves as cofactor.

It carries out the reaction citrate = D-threo-isocitrate. It catalyses the reaction (2S,3R)-3-hydroxybutane-1,2,3-tricarboxylate = 2-methyl-cis-aconitate + H2O. It functions in the pathway carbohydrate metabolism; tricarboxylic acid cycle; isocitrate from oxaloacetate: step 2/2. The protein operates within organic acid metabolism; propanoate degradation. Involved in the catabolism of short chain fatty acids (SCFA) via the tricarboxylic acid (TCA)(acetyl degradation route) and probably the 2-methylcitrate cycle I (propionate degradation route). Catalyzes the reversible isomerization of citrate to isocitrate via cis-aconitate. Could catalyze the hydration of 2-methyl-cis-aconitate to yield (2R,3S)-2-methylisocitrate. The apo form of AcnA functions as a RNA-binding regulatory protein. In Francisella tularensis subsp. holarctica (strain LVS), this protein is Aconitate hydratase A (acn).